A 225-amino-acid chain; its full sequence is ATP-dependent dethiobiotin synthetase BioD (225 aa).

15 to 20 (EIGKTF) serves as a coordination point for ATP. Thr19 provides a ligand contact to Mg(2+). The active site involves Lys40. Residues Asp57, 118–121 (EGVG), 178–179 (NR), and 207–209 (PHV) contribute to the ATP site. The Mg(2+) site is built by Asp57 and Glu118.

This sequence belongs to the dethiobiotin synthetase family. Homodimer. Mg(2+) is required as a cofactor.

The protein resides in the cytoplasm. It catalyses the reaction (7R,8S)-7,8-diammoniononanoate + CO2 + ATP = (4R,5S)-dethiobiotin + ADP + phosphate + 3 H(+). It functions in the pathway cofactor biosynthesis; biotin biosynthesis; biotin from 7,8-diaminononanoate: step 1/2. Functionally, catalyzes a mechanistically unusual reaction, the ATP-dependent insertion of CO2 between the N7 and N8 nitrogen atoms of 7,8-diaminopelargonic acid (DAPA, also called 7,8-diammoniononanoate) to form a ureido ring. The sequence is that of ATP-dependent dethiobiotin synthetase BioD from Aromatoleum aromaticum (strain DSM 19018 / LMG 30748 / EbN1) (Azoarcus sp. (strain EbN1)).